The primary structure comprises 272 residues: HMP-PP phosphatase (272 aa).

D8 (nucleophile) is an active-site residue. Positions 8, 10, and 212 each coordinate Mg(2+).

The protein belongs to the HAD-like hydrolase superfamily. Cof family. Requires Mg(2+) as cofactor.

The enzyme catalyses 4-amino-2-methyl-5-(diphosphooxymethyl)pyrimidine + H2O = 4-amino-2-methyl-5-(phosphooxymethyl)pyrimidine + phosphate + H(+). Catalyzes the hydrolysis of 4-amino-2-methyl-5-hydroxymethylpyrimidine pyrophosphate (HMP-PP) to 4-amino-2-methyl-5-hydroxymethylpyrimidine phosphate (HMP-P). The protein is HMP-PP phosphatase of Klebsiella pneumoniae (strain 342).